A 263-amino-acid chain; its full sequence is Uridylate kinase (263 aa).

ATP is bound at residue 29–32 (KVSG). UMP is bound at residue G71. Residues G72 and R76 each coordinate ATP. Residues D91 and 152–159 (TGNPFFTT) each bind UMP. ATP contacts are provided by T179, Q180, Y185, and D188.

Belongs to the UMP kinase family. In terms of assembly, homohexamer.

The protein localises to the cytoplasm. It catalyses the reaction UMP + ATP = UDP + ADP. The protein operates within pyrimidine metabolism; CTP biosynthesis via de novo pathway; UDP from UMP (UMPK route): step 1/1. Its activity is regulated as follows. Inhibited by UTP. Functionally, catalyzes the reversible phosphorylation of UMP to UDP. This chain is Uridylate kinase, found in Maricaulis maris (strain MCS10) (Caulobacter maris).